A 371-amino-acid chain; its full sequence is Methionine import ATP-binding protein MetN (371 aa).

Residues 1-22 (MSEPFMNAPWQPPGDHPALKSP) are disordered. The ABC transporter domain occupies 27 to 268 (ILIDSVRKLY…PRHEVTRRFV (242 aa)). Residue 65–72 (GRSGAGKS) coordinates ATP.

Belongs to the ABC transporter superfamily. Methionine importer (TC 3.A.1.24) family. The complex is composed of two ATP-binding proteins (MetN), two transmembrane proteins (MetI) and a solute-binding protein (MetQ).

It is found in the cell inner membrane. It carries out the reaction L-methionine(out) + ATP + H2O = L-methionine(in) + ADP + phosphate + H(+). The enzyme catalyses D-methionine(out) + ATP + H2O = D-methionine(in) + ADP + phosphate + H(+). In terms of biological role, part of the ABC transporter complex MetNIQ involved in methionine import. Responsible for energy coupling to the transport system. In Rhodopseudomonas palustris (strain BisB5), this protein is Methionine import ATP-binding protein MetN.